Reading from the N-terminus, the 421-residue chain is Chitin deacetylase (421 aa).

Residues 1-21 (MQIKTFALSAAIAQVATLALA) form the signal peptide. N-linked (GlcNAc...) asparagine glycans are attached at residues Asn39, Asn70, Asn87, and Asn106. The 193-residue stretch at 157-349 (ETWGLTYDDG…YKQVIDVATC (193 aa)) folds into the NodB homology domain. Asp164 functions as the Proton acceptor in the catalytic mechanism. Asp164 is a binding site for acetate. Asp165 is a binding site for Co(2+). An N-linked (GlcNAc...) asparagine glycan is attached at Asn168. Co(2+)-binding residues include His214 and His218. Residue Tyr255 participates in acetate binding. Asn307 carries an N-linked (GlcNAc...) asparagine glycan. His320 (proton donor) is an active-site residue. N-linked (GlcNAc...) asparagine glycans are attached at residues Asn323, Asn351, and Asn367. Thr390 is lipidated: GPI-anchor amidated threonine. A propeptide spans 391-421 (AAAHIQASTSGAMSVLPNLALISAFIATLLF) (removed in mature form).

The protein belongs to the polysaccharide deacetylase family. Co(2+) is required as a cofactor.

The protein resides in the secreted. It localises to the cell wall. It is found in the cell membrane. It carries out the reaction [(1-&gt;4)-N-acetyl-beta-D-glucosaminyl](n) + n H2O = chitosan + n acetate. Its function is as follows. Hydrolyzes the N-acetamido groups of N-acetyl-D-glucosamine residues in chitin to form chitosan and acetate. This is Chitin deacetylase from Amylomyces rouxii (Filamentous fungus).